We begin with the raw amino-acid sequence, 471 residues long: Pneumolysin (471 aa).

A run of 4 beta stranded transmembrane segments spans residues 158–171, 178–187, 256–265, and 273–285; these read MEQL…DFEK, IDFNSVHSGE, SDEVEAAFEA, and APQT…LDNT. A Conserved undecapeptide motif is present at residues 427-437; that stretch reads ECTGLAWEWWR. The Cholesterol binding motif lies at 459–460; the sequence is TL.

The protein belongs to the cholesterol-dependent cytolysin family. In terms of assembly, elongated monomers align along their lengths, indicating intersubunit contacts and suggesting the prepore structure. Modeling based on cryo-EM shows a homooligomeric pore complex containing 38-44 subunits; when inserted in the host membrane. The size of isolated pores is detergent-dependent; in amphipol A8-35 homogenous rings form with 42 subunits.

The protein localises to the secreted. Its subcellular location is the host cell membrane. Its activity is regulated as follows. Erythrocytes hemolysis is inhibited by cholesterol. Functionally, a cholesterol-dependent toxin that causes cytolysis by forming pores in cholesterol-containing host membranes. After binding to target membranes, the protein undergoes a major conformation change, leading to its insertion in the host membrane and formation of an oligomeric pore complex. Cholesterol is required for binding to host membranes, membrane insertion and pore formation; cholesterol binding is mediated by a Thr-Leu pair in the C-terminus. Can be reversibly inactivated by oxidation. This Streptococcus pneumoniae serotype 2 (strain D39 / NCTC 7466) protein is Pneumolysin (ply).